We begin with the raw amino-acid sequence, 23 residues long: Thylakoid lumenal 17.4 kDa protein (23 aa).

The disordered stretch occupies residues A1–T23.

It is found in the plastid. Its subcellular location is the chloroplast thylakoid lumen. The protein is Thylakoid lumenal 17.4 kDa protein of Spinacia oleracea (Spinach).